Consider the following 268-residue polypeptide: Tryptophan synthase alpha chain (268 aa).

Residues Glu49 and Asp60 each act as proton acceptor in the active site.

It belongs to the TrpA family. As to quaternary structure, tetramer of two alpha and two beta chains.

It catalyses the reaction (1S,2R)-1-C-(indol-3-yl)glycerol 3-phosphate + L-serine = D-glyceraldehyde 3-phosphate + L-tryptophan + H2O. The protein operates within amino-acid biosynthesis; L-tryptophan biosynthesis; L-tryptophan from chorismate: step 5/5. Functionally, the alpha subunit is responsible for the aldol cleavage of indoleglycerol phosphate to indole and glyceraldehyde 3-phosphate. This Pseudomonas aeruginosa (strain LESB58) protein is Tryptophan synthase alpha chain.